Reading from the N-terminus, the 218-residue chain is Probable transaldolase 2 (218 aa).

The Schiff-base intermediate with substrate role is filled by Lys83.

Belongs to the transaldolase family. Type 3B subfamily.

The protein localises to the cytoplasm. The catalysed reaction is D-sedoheptulose 7-phosphate + D-glyceraldehyde 3-phosphate = D-erythrose 4-phosphate + beta-D-fructose 6-phosphate. Its pathway is carbohydrate degradation; pentose phosphate pathway; D-glyceraldehyde 3-phosphate and beta-D-fructose 6-phosphate from D-ribose 5-phosphate and D-xylulose 5-phosphate (non-oxidative stage): step 2/3. Transaldolase is important for the balance of metabolites in the pentose-phosphate pathway. This chain is Probable transaldolase 2, found in Listeria innocua serovar 6a (strain ATCC BAA-680 / CLIP 11262).